The following is a 328-amino-acid chain: DNA repair protein RAD51 homolog 4 (328 aa).

Positions 1–83 (MGVLRVGLCP…ELKTSTAILS (83 aa)) are preferentially binds ssDNA. An ATP-binding site is contributed by 107–114 (GGPGSGKT).

Belongs to the RecA family. RAD51 subfamily. In terms of assembly, part of the BCDX2 complex consisting of RAD51B, RAD51C, RAD51D and XRCC2; the complex has a ring-like structure arranged into a flat disc around a central channel. In the absence of DNA, the BCDX2 subcomplex XRCC2:RAD51D formed a multimeric ring structure; in the presence of single-stranded DNA it formed a filamentous structure with the ssDNA. Interacts with SWSAP1 and ZSWIM7; involved in homologous recombination repair. Interacts with BLM; required for stimulation of BLM activity by the BCDX2 subcomplex XRCC2:RAD51D. Expressed in colon, prostate, spleen, testis, ovary, thymus and small intestine. Weakly expressed in leukocytes.

It localises to the nucleus. The protein resides in the cytoplasm. Its subcellular location is the cytoskeleton. It is found in the microtubule organizing center. The protein localises to the centrosome. It localises to the chromosome. The protein resides in the telomere. Involved in the homologous recombination repair (HRR) pathway of double-stranded DNA breaks arising during DNA replication or induced by DNA-damaging agents. Bind to single-stranded DNA (ssDNA) and has DNA-dependent ATPase activity. Part of the RAD51 paralog protein complex BCDX2 which acts in the BRCA1-BRCA2-dependent HR pathway. Upon DNA damage, BCDX2 acts downstream of BRCA2 recruitment and upstream of RAD51 recruitment. BCDX2 binds predominantly to the intersection of the four duplex arms of the Holliday junction and to junction of replication forks. The BCDX2 complex was originally reported to bind single-stranded DNA, single-stranded gaps in duplex DNA and specifically to nicks in duplex DNA. Involved in telomere maintenance. The BCDX2 subcomplex XRCC2:RAD51D can stimulate Holliday junction resolution by BLM. The protein is DNA repair protein RAD51 homolog 4 (RAD51D) of Homo sapiens (Human).